The sequence spans 105 residues: Nucleoid-associated protein SaurJH1_0513 (105 aa).

A disordered region spans residues 1–33 (MRGGGNMQQMMKQMQKMQKKMAQEQKKLKEERI). Residues 7-16 (MQQMMKQMQK) show a composition bias toward low complexity. Over residues 21–33 (MAQEQKKLKEERI) the composition is skewed to basic and acidic residues.

It belongs to the YbaB/EbfC family. Homodimer.

It is found in the cytoplasm. The protein localises to the nucleoid. Functionally, binds to DNA and alters its conformation. May be involved in regulation of gene expression, nucleoid organization and DNA protection. The protein is Nucleoid-associated protein SaurJH1_0513 of Staphylococcus aureus (strain JH1).